The sequence spans 122 residues: Large ribosomal subunit protein uL14 (122 aa).

This sequence belongs to the universal ribosomal protein uL14 family. In terms of assembly, part of the 50S ribosomal subunit. Forms a cluster with proteins L3 and L19. In the 70S ribosome, L14 and L19 interact and together make contacts with the 16S rRNA in bridges B5 and B8.

Functionally, binds to 23S rRNA. Forms part of two intersubunit bridges in the 70S ribosome. This Psychromonas ingrahamii (strain DSM 17664 / CCUG 51855 / 37) protein is Large ribosomal subunit protein uL14.